The following is a 158-amino-acid chain: Transcriptional repressor NrdR (158 aa).

The segment at 3 to 34 is a zinc-finger region; that stretch reads CPFCGSLDTQVIDSRANEAGDAIRRRRRCAAC. One can recognise an ATP-cone domain in the interval 49-139; that stretch reads PQIVKTNGTR…VYKSFKDPDD (91 aa).

The protein belongs to the NrdR family. Zn(2+) is required as a cofactor.

Its function is as follows. Negatively regulates transcription of bacterial ribonucleotide reductase nrd genes and operons by binding to NrdR-boxes. The chain is Transcriptional repressor NrdR from Thiobacillus denitrificans (strain ATCC 25259 / T1).